A 194-amino-acid chain; its full sequence is Mitochondrial import inner membrane translocase subunit Tim22 (194 aa).

Disulfide bonds link Cys69–Cys141 and Cys160–Cys179. A run of 3 helical transmembrane segments spans residues 74–94 (VLACVGGFVLGGAFGIFTAGI), 123–143 (MSYAKNFAIVGAMFSCTECLV), and 170–190 (AGVKAGAIGCGGFAAFSAAID).

Belongs to the Tim17/Tim22/Tim23 family. Component of the TIM22 complex, whose core is composed of TIMM22, associated with peripheral protein FXC1/TIMM10B and the 70 kDa heterohexamer. In most cases, the 70 kDa complex is composed of TIMM9 and TIMM10 (TIMM10A or TIMM10B). A small fraction of the 70 kDa complex is composed of TIMM8 (TIMM8A/DDP1 or TIMM8B/DDP2) and TIMM13. The TIM22 complex also contains AGK and TIMM29. Interacts directly with TIMM9, TIMM10A and FXC1/TIMM10B. Interacts (when oxidized) with TIMM29; interaction is direct. In terms of processing, disulfide bonds promote efficient assembly of the TIM22 complex.

It localises to the mitochondrion inner membrane. Essential core component of the TIM22 complex, a complex that mediates the import and insertion of multi-pass transmembrane proteins into the mitochondrial inner membrane. In the TIM22 complex, it constitutes the voltage-activated and signal-gated channel. Forms a twin-pore translocase that uses the membrane potential as external driving force in 2 voltage-dependent steps. The sequence is that of Mitochondrial import inner membrane translocase subunit Tim22 (Timm22) from Mus musculus (Mouse).